A 432-amino-acid chain; its full sequence is Trigger factor (432 aa).

The region spanning 161 to 246 (GKRVSIDFVG…VNKVEARQLP (86 aa)) is the PPIase FKBP-type domain.

The protein belongs to the FKBP-type PPIase family. Tig subfamily.

The protein resides in the cytoplasm. It catalyses the reaction [protein]-peptidylproline (omega=180) = [protein]-peptidylproline (omega=0). Involved in protein export. Acts as a chaperone by maintaining the newly synthesized protein in an open conformation. Functions as a peptidyl-prolyl cis-trans isomerase. The sequence is that of Trigger factor from Vibrio vulnificus (strain CMCP6).